A 524-amino-acid chain; its full sequence is MTTTTQSEQDRVIIFDTTLRDGEQCPGATMTFEEKLNVARMLDDMGVDVIEAGYPFASDGDFEAVHEIAKRSKNSVICGLSRAAHKDIDRCAEAIKPAERGRIHTFLSTSPVHMKYKLQMEAAQVYEMVISSVTRARNHTDDVEWSAEDATRTEFDFLCRCIEAAIKAGATTINLPDTVGYAVPEEYRELFRKVRETVPNSDKARFSVHCHNDLGMAVANSMAGVAGGARQIECTINGIGERAGNAALEEVVMAMRVRQDKLPYWNRIETTMLTHASKTVSAATSFPVQYNKAIVGRNAFAHESGIHQDGMIKNAQTYEIMTPETVGVKGTSLVMGKHSGRAGLIHKMEELGYKLSRNQIEDVFVRFKALADRKKDVYDEDIEALVDEQLLHGQDQIKLMSLTVIAGTHGPQRATMKLDVDGQIRIEEAEGNGPVDAVFNCIKALVPHDAKLELYQVHAVTEGTDAQAEVSVRLSHEGRSMTARAADPDTLVASAKAYLGALNKIVAKRQRSVREDAPTVAVAG.

Residues 12–274 enclose the Pyruvate carboxyltransferase domain; it reads VIIFDTTLRD…WNRIETTMLT (263 aa). Residues aspartate 21, histidine 209, histidine 211, and asparagine 245 each coordinate Mn(2+). Residues 398–524 form a regulatory domain region; the sequence is KLMSLTVIAG…EDAPTVAVAG (127 aa).

It belongs to the alpha-IPM synthase/homocitrate synthase family. LeuA type 1 subfamily. Homodimer. It depends on Mn(2+) as a cofactor.

It localises to the cytoplasm. The catalysed reaction is 3-methyl-2-oxobutanoate + acetyl-CoA + H2O = (2S)-2-isopropylmalate + CoA + H(+). The protein operates within amino-acid biosynthesis; L-leucine biosynthesis; L-leucine from 3-methyl-2-oxobutanoate: step 1/4. Functionally, catalyzes the condensation of the acetyl group of acetyl-CoA with 3-methyl-2-oxobutanoate (2-ketoisovalerate) to form 3-carboxy-3-hydroxy-4-methylpentanoate (2-isopropylmalate). This chain is 2-isopropylmalate synthase, found in Rhodopseudomonas palustris (strain TIE-1).